The chain runs to 535 residues: MLITGLIIGCLLIGLVIGYVVRQHQHRQELLAVQKQARDIIASATAETQQKIAKLTADSRRETLTYQQSVKDELAEQTSDIAVREQRRQQREQLLGQMGVRLADQTAILDERSQANRDQRQKIRDLKAQALQLRTDRDEMLAQQAGIDEQAAKDHVLADTELDLKRDRDVEIKALNDNAVANAERWAKDVVLSATESGPQDLPKEHLEHTVTVPNGEIRSKIIGRDGQHIRLLETLTGTDLIFVPDDNTTLFISTHDPIRREVARVALTNLVASRRISSNQIETQVENAQRDVNHSLWETGEQTVSGLHVGWMHPDLMKLIGRLKYRTSYGQNVLLHSIEVAQLTGAMAARLGYNTRLARRAGLLHDLGKAIDHEVEGTHVEIGTEFAQKYGEDDVVINAIAAHHGDVEKTSPLAELVAAADAISGARPGARSESVEDYINRLRALEKIANDQSGVAESYAIQAGRELRIIVKPQELDDTAAANLTQEVAQQIESTLTYPGKIKVTTIRKSTAVEYVGDEKKKKSKKKKKKAANA.

A helical membrane pass occupies residues 1–21 (MLITGLIIGCLLIGLVIGYVV). Residues 207 to 268 (LEHTVTVPNG…IRREVARVAL (62 aa)) enclose the KH domain. In terms of domain architecture, HD spans 334–427 (VLLHSIEVAQ…VAAADAISGA (94 aa)).

It belongs to the RNase Y family.

The protein localises to the cell membrane. Its function is as follows. Endoribonuclease that initiates mRNA decay. This Levilactobacillus brevis (strain ATCC 367 / BCRC 12310 / CIP 105137 / JCM 1170 / LMG 11437 / NCIMB 947 / NCTC 947) (Lactobacillus brevis) protein is Ribonuclease Y 2.